We begin with the raw amino-acid sequence, 688 residues long: Translation initiation factor IF-2 (688 aa).

Basic and acidic residues-rich tracts occupy residues 53–62 (GKEKSEKTKE) and 86–95 (KRDDKNEKVN). The interval 53 to 100 (GKEKSEKTKEEDDEIETTAKNPIKESMNNKKSNKRDDKNEKVNTENAE) is disordered. The tr-type G domain maps to 187 to 354 (KRSPIITVMG…MILLSSEILE (168 aa)). Residues 196–203 (GHVDHGKT) are G1. GTP is bound at residue 196-203 (GHVDHGKT). The segment at 221-225 (GITQH) is G2. The segment at 242-245 (DTPG) is G3. GTP is bound by residues 242 to 246 (DTPGH) and 296 to 299 (NKID). The tract at residues 296 to 299 (NKID) is G4. A G5 region spans residues 332 to 334 (SAH).

It belongs to the TRAFAC class translation factor GTPase superfamily. Classic translation factor GTPase family. IF-2 subfamily.

The protein localises to the cytoplasm. Functionally, one of the essential components for the initiation of protein synthesis. Protects formylmethionyl-tRNA from spontaneous hydrolysis and promotes its binding to the 30S ribosomal subunits. Also involved in the hydrolysis of GTP during the formation of the 70S ribosomal complex. The sequence is that of Translation initiation factor IF-2 from Clostridium botulinum (strain Kyoto / Type A2).